The following is a 277-amino-acid chain: Orotidine 5'-phosphate decarboxylase (277 aa).

Residue lysine 95 is the Proton donor of the active site.

It belongs to the OMP decarboxylase family. Type 2 subfamily.

It carries out the reaction orotidine 5'-phosphate + H(+) = UMP + CO2. It functions in the pathway pyrimidine metabolism; UMP biosynthesis via de novo pathway; UMP from orotate: step 2/2. The polypeptide is Orotidine 5'-phosphate decarboxylase (Mycolicibacterium vanbaalenii (strain DSM 7251 / JCM 13017 / BCRC 16820 / KCTC 9966 / NRRL B-24157 / PYR-1) (Mycobacterium vanbaalenii)).